Reading from the N-terminus, the 488-residue chain is MTDRKNLTTNQGVPVGDNQNSMTAGRKGPTLIEDYVLIEKLAHFDRERVPERVVHARGAGAHGKFVTKKSMKKYTMAKFLQEEGTETEVFARFSTVIHGQHSPETLRDPRGFSVKFYTEEGNYDFVGNNLPVFFIRDAIKFPDVIHSLKPDPRTNIQDGNRYWDFFSLTPEATTMIMYLFSDEGTPASYREVRGSSVHAFKWINEEGKTVYVKLRWVPKAGIVNLSTEQASQIQAKEFNHASRDLYEAIENGDYPEWDLYVQVLDPKDLDSFDFNPLDATKDWFEDVFPYEHVGTMTLDRNPDNIFAETESVGFNPGVLVRGMLPSEDRLLQGRLFSYSDTQRHRVGPNYLQLPINSPKAPVANNQRDGHMPFKQQTSSINYEPNSYDTEPKENPAFIEPEQEIRGDISGRLIAEKPNNFGHAKEVWDRYSNAERAALVKNIVDDWSQVREDIKIRNLRNFYQVDPEFASRVAAGTGINLEEHVTDLK.

The tract at residues 1–26 (MTDRKNLTTNQGVPVGDNQNSMTAGR) is disordered. Polar residues predominate over residues 7–23 (LTTNQGVPVGDNQNSMT). Active-site residues include His55 and Asn128. Tyr338 contributes to the heme binding site.

The protein belongs to the catalase family. Heme is required as a cofactor.

Its subcellular location is the cytoplasm. It carries out the reaction 2 H2O2 = O2 + 2 H2O. Its function is as follows. Decomposes hydrogen peroxide into water and oxygen; serves to protect cells from the toxic effects of hydrogen peroxide. The polypeptide is Catalase (kat) (Listeria monocytogenes serovar 1/2a (strain ATCC BAA-679 / EGD-e)).